A 162-amino-acid polypeptide reads, in one-letter code: Protein-export protein SecB (162 aa).

It belongs to the SecB family. As to quaternary structure, homotetramer, a dimer of dimers. One homotetramer interacts with 1 SecA dimer.

Its subcellular location is the cytoplasm. In terms of biological role, one of the proteins required for the normal export of preproteins out of the cell cytoplasm. It is a molecular chaperone that binds to a subset of precursor proteins, maintaining them in a translocation-competent state. It also specifically binds to its receptor SecA. This chain is Protein-export protein SecB, found in Legionella pneumophila (strain Paris).